Here is a 221-residue protein sequence, read N- to C-terminus: Ribosomal RNA small subunit methyltransferase G (221 aa).

S-adenosyl-L-methionine contacts are provided by residues Gly85, Phe90, 136 to 137, and Arg149; that span reads AE.

This sequence belongs to the methyltransferase superfamily. RNA methyltransferase RsmG family.

It is found in the cytoplasm. Specifically methylates the N7 position of a guanine in 16S rRNA. In Porphyromonas gingivalis (strain ATCC BAA-308 / W83), this protein is Ribosomal RNA small subunit methyltransferase G.